Reading from the N-terminus, the 366-residue chain is Ribosomal RNA small subunit methyltransferase H 1 (366 aa).

Positions methionine 1–arginine 46 are disordered. Residues histidine 25–lysine 37 show a composition bias toward basic residues. Residues glycine 97 to histidine 99, aspartate 117, phenylalanine 147, aspartate 166, and glutamine 173 each bind S-adenosyl-L-methionine.

The protein belongs to the methyltransferase superfamily. RsmH family.

The protein resides in the cytoplasm. The enzyme catalyses cytidine(1402) in 16S rRNA + S-adenosyl-L-methionine = N(4)-methylcytidine(1402) in 16S rRNA + S-adenosyl-L-homocysteine + H(+). Functionally, specifically methylates the N4 position of cytidine in position 1402 (C1402) of 16S rRNA. This Lachnoclostridium phytofermentans (strain ATCC 700394 / DSM 18823 / ISDg) (Clostridium phytofermentans) protein is Ribosomal RNA small subunit methyltransferase H 1.